A 492-amino-acid chain; its full sequence is uncharacterized protein (492 aa).

This sequence belongs to the FGGY kinase family.

This is an uncharacterized protein from Archaeoglobus fulgidus (strain ATCC 49558 / DSM 4304 / JCM 9628 / NBRC 100126 / VC-16).